The chain runs to 215 residues: uncharacterized protein (215 aa).

This sequence to T.pallidum TP_0127, TP_0618 and TP_0619.

This is an uncharacterized protein from Treponema pallidum (strain Nichols).